We begin with the raw amino-acid sequence, 268 residues long: Regulation of nuclear pre-mRNA domain-containing protein 1A (268 aa).

Residues 1 to 133 (MSAFSEAALE…QLRQALYGDR (133 aa)) form the CID domain.

It belongs to the UPF0400 (RTT103) family. In terms of assembly, may form a heterodimer with RPRD1B. Associates with the RNA polymerase II subunit POLR2A (via CTD phosphorylated at 'Ser-2' and 'Ser-7' of the heptad repeats).

The protein localises to the nucleus. Its function is as follows. Interacts with phosphorylated C-terminal heptapeptide repeat domain (CTD) of the largest RNA polymerase II subunit POLR2A, and participates in dephosphorylation of the CTD by RPAP2. May act as a negative regulator of cyclin-D1 (CCND1) and cyclin-E (CCNE1) in the cell cycle. This is Regulation of nuclear pre-mRNA domain-containing protein 1A (RPRD1A) from Gallus gallus (Chicken).